Consider the following 376-residue polypeptide: MDISSDESDDWFMESLNAYRDLHLFQLEHPTKVIEWMGDKSICVAGYTGARSEILELLLPLKLYAGDNQGLCAERDFKVKHGGFSEEPVECLIHIPGTRCLVTSGNSNTLQIWDIGGDDSDVIKMTRVINLKSPSAKGSKITPGFTDSPTVLHGSCISDIQLTEIATGRVLHTVGKESSDSVSGLQFVNAFVFLICSTNGALLLGDTRDPSTCHYPLEESNSGLRWSFGLRSDSSQSEPSCCKVARLSSSGHMLLSDLRDLKSPFCQTQIKVPQSASKNHFMNISWAPVLDKCLSVSGFDGTVHIYNTNNWSTESSSPQPIFSHRGHEMSQEAKSSTSPAVVTAHSWHPSRPKTLLSAATDGSLHVWDWVDKITDR.

WD repeat units follow at residues 84–123 (FSEEPVECLIHIPGTRCLVTSGNSNTLQIWDIGGDDSDVI), 276–316 (ASKN…TESS), and 337–376 (TSPAVVTAHSWHPSRPKTLLSAATDGSLHVWDWVDKITDR). Positions 316-336 (SSPQPIFSHRGHEMSQEAKSS) are disordered.

The protein belongs to the WD repeat WDR73 family.

The protein resides in the cytoplasm. It is found in the cytoskeleton. It localises to the spindle. Its subcellular location is the spindle pole. The protein localises to the cleavage furrow. Component of a multiprotein complex required for the assembly of the RNA endonuclease module of the integrator complex. Associates with ints9 and ints11 in the cytoplasm, stabilizing the ints9-ints11 heterodimer and blocking the active site of ints11. Brat1 then joins the complex and plugs the active site of ints11, leading to wdr73 release and nuclear import of ints9 and ints11. This chain is Integrator complex assembly factor WDR73 (wdr73), found in Danio rerio (Zebrafish).